A 31-amino-acid polypeptide reads, in one-letter code: Cliotide T13 (31 aa).

Positions 1 to 31 (DTTPCGESCVWIPCVSSIVGCSCQNKVCYQN) form a cross-link, cyclopeptide (Asp-Asn). Intrachain disulfides connect C5-C21, C9-C23, and C14-C28.

In terms of processing, contains 3 disulfide bonds. This is a cyclic peptide. In terms of tissue distribution, expressed in seed but not in root nodules.

Its function is as follows. Probably participates in a plant defense mechanism. Not active against Gram-negative bacterium E.coli ATCC 700926 or Gram-positive bacterium S.aureus ATCC 12600 up to a concentration of 100 uM under low-salt conditions. The chain is Cliotide T13 from Clitoria ternatea (Butterfly pea).